The chain runs to 139 residues: Putative pre-16S rRNA nuclease (139 aa).

The protein belongs to the YqgF nuclease family.

It localises to the cytoplasm. Could be a nuclease involved in processing of the 5'-end of pre-16S rRNA. In Pectobacterium carotovorum subsp. carotovorum (strain PC1), this protein is Putative pre-16S rRNA nuclease.